The following is a 95-amino-acid chain: UPF0235 protein Sama_2480 (95 aa).

This sequence belongs to the UPF0235 family.

This Shewanella amazonensis (strain ATCC BAA-1098 / SB2B) protein is UPF0235 protein Sama_2480.